A 333-amino-acid chain; its full sequence is Probable G-protein coupled receptor 33 (333 aa).

Topologically, residues 1–30 (MDLINSTDYLINASTLVRNSTQFLAPASKM) are extracellular. 3 N-linked (GlcNAc...) asparagine glycosylation sites follow: N5, N12, and N19. The chain crosses the membrane as a helical span at residues 31-53 (IIALSLYISSIIGTITNGLYLWV). Topologically, residues 54–64 (LRFKMKQTVNT) are cytoplasmic. The chain crosses the membrane as a helical span at residues 65-86 (LLFFHLILSYFISTMILPFMAT). At 87–103 (SQLQDNHWNFGTALCKV) the chain is on the extracellular side. Cysteines 101 and 179 form a disulfide. A helical membrane pass occupies residues 104–124 (FNGTLSLGMFTSVFFLSAIGL). The Cytoplasmic portion of the chain corresponds to 125–143 (DRYLLTLHPVWSQQHRTPR). A helical transmembrane segment spans residues 144–165 (WASSIVLGVWISAAALSIPYLI). Residues 166 to 209 (FRETHHDRKGKVTCQNNYAVSTNWESKEMQASRQWIHVACFISR) lie on the Extracellular side of the membrane. Residues 210-230 (FLLGFLLPFFIIIFCYERVAS) traverse the membrane as a helical segment. Residues 231-246 (KVKERSLFKSSKPFKV) lie on the Cytoplasmic side of the membrane. A helical membrane pass occupies residues 247-268 (MMTAIISFFVCWMPYHIHQGLL). Residues 269–283 (LTTNQSLLLELTLIL) are Extracellular-facing. The N-linked (GlcNAc...) asparagine glycan is linked to N272. The chain crosses the membrane as a helical span at residues 284–303 (TVLTTSFNTIFSPTLYLFVG). The Cytoplasmic segment spans residues 304-333 (ENFKKVFKKSILALFESTFSEDSSVERTQT).

The protein belongs to the G-protein coupled receptor 1 family. As to expression, expressed in spleen, lung, heart, liver, kidney, pancreas, thymus, gonads and leukocytes.

Its subcellular location is the cell membrane. In terms of biological role, orphan receptor; could be a chemoattractant receptor. This chain is Probable G-protein coupled receptor 33 (GPR33), found in Homo sapiens (Human).